Here is a 110-residue protein sequence, read N- to C-terminus: Endoribonuclease SymE (110 aa).

The SpoVT-AbrB domain maps to S29–P74.

This sequence belongs to the SymE family.

It is found in the cytoplasm. Its function is as follows. Involved in the degradation and recycling of damaged RNA. It is itself a target for degradation by the ATP-dependent protease Lon. The sequence is that of Endoribonuclease SymE from Salmonella paratyphi C (strain RKS4594).